Consider the following 124-residue polypeptide: MNQQELIEEINKIESCSLVFERFFGYLPNDIKERKQYILKFNKTLKDEKRKLKCKKTFKGEKKNKKQTFLKHHQSDDHSENKVYKSKKLEKKIQQLNKKKQLIDTKINFLKEIKESNKINKSKI.

Residues lysine 62–histidine 72 show a composition bias toward basic residues. The interval lysine 62–serine 86 is disordered. The span at histidine 73 to valine 83 shows a compositional bias: basic and acidic residues. Residues glutamate 80 to glutamate 112 adopt a coiled-coil conformation.

This is an uncharacterized protein from Dictyostelium discoideum (Social amoeba).